Consider the following 641-residue polypeptide: Protein GAMETE EXPRESSED 3 (641 aa).

The first 29 residues, 1–29 (MVAFRFVYIPLPFFFFFFFFFVFFSGVSQ), serve as a signal peptide directing secretion. The helical transmembrane segment at 441-461 (IIWFLLFEFVIMVLFAALVRF) threads the bilayer. The segment at 570 to 627 (ITIFQTPSDESSSEESYRDEHYDDVADDEHDEDDLDRKQKGKLLAHSEGSSNDGDGIA) is disordered. A compositionally biased stretch (basic and acidic residues) spans 584 to 593 (ESYRDEHYDD). A compositionally biased stretch (acidic residues) spans 594 to 603 (VADDEHDEDD).

As to expression, expressed in mature siliques and in pollen, mainly in the sperm cells. Detected in the egg cell within the female gametophyte.

The protein resides in the cell membrane. Required for micropylar pollen tube guidance. Plays a role during early embryo patterning. In Arabidopsis thaliana (Mouse-ear cress), this protein is Protein GAMETE EXPRESSED 3 (GEX3).